The primary structure comprises 632 residues: Biosynthetic arginine decarboxylase (632 aa).

Position 101 is an N6-(pyridoxal phosphate)lysine (Lys101). Substrate is bound at residue 281–291; the sequence is FDVGGGLGVDY.

It belongs to the Orn/Lys/Arg decarboxylase class-II family. SpeA subfamily. It depends on Mg(2+) as a cofactor. Pyridoxal 5'-phosphate serves as cofactor.

The enzyme catalyses L-arginine + H(+) = agmatine + CO2. Its pathway is amine and polyamine biosynthesis; agmatine biosynthesis; agmatine from L-arginine: step 1/1. Catalyzes the biosynthesis of agmatine from arginine. This is Biosynthetic arginine decarboxylase from Escherichia coli O157:H7 (strain EC4115 / EHEC).